The chain runs to 156 residues: MPRRRSIEPRKILPDPKFGSELLAKFINVLMVDGKKSIAESIVYNALETLAQRSGKDALEAFEIALENVRPTVEVKSRRVGGSTYQVPVEVRPTRRNALAMRWIVEAARKRGDKSMAMRLANELSDAADNKGSAVKKREDVHRMAEANKAFAHYRW.

Belongs to the universal ribosomal protein uS7 family. Part of the 30S ribosomal subunit. Contacts proteins S9 and S11.

Its function is as follows. One of the primary rRNA binding proteins, it binds directly to 16S rRNA where it nucleates assembly of the head domain of the 30S subunit. Is located at the subunit interface close to the decoding center, probably blocks exit of the E-site tRNA. The sequence is that of Small ribosomal subunit protein uS7 from Glaesserella parasuis serovar 5 (strain SH0165) (Haemophilus parasuis).